The primary structure comprises 268 residues: MSAPDTVSPLDLRFSAAELAERRDRIQSFIRDTVAAAGAERCVLGLSGGIDSTTVAHLTVDELGADALHGLVMPGAVSRDQNMSDAERVAEDLGIEYDVVEIDPFVTQLTDVFPDAAGDEVAVGNARARTRAVINYFVANHGDGVVLGTGNRAEAMTGYYTKYGDQAVDCNPIGNLYKMQVRQLARDLGVPEDLVTKAPTAELWADQTDAGELGVDYDTIDAVLAVHVDGGLPASATATHLDIDPSVVETVRDLYGASKHKRAMPPAP.

Gly45 to Ser52 is a binding site for ATP. Position 51 (Asp51) interacts with Mg(2+). Arg129 contributes to the deamido-NAD(+) binding site. An ATP-binding site is contributed by Thr149. Glu154 serves as a coordination point for Mg(2+). Positions 162 and 169 each coordinate deamido-NAD(+). Residues Lys178 and Thr200 each coordinate ATP. His260–Lys261 serves as a coordination point for deamido-NAD(+).

This sequence belongs to the NAD synthetase family. In terms of assembly, homodimer.

It catalyses the reaction deamido-NAD(+) + NH4(+) + ATP = AMP + diphosphate + NAD(+) + H(+). It participates in cofactor biosynthesis; NAD(+) biosynthesis; NAD(+) from deamido-NAD(+) (ammonia route): step 1/1. In terms of biological role, catalyzes the ATP-dependent amidation of deamido-NAD to form NAD. Uses ammonia as a nitrogen source. This chain is NH(3)-dependent NAD(+) synthetase, found in Halobacterium salinarum (strain ATCC 29341 / DSM 671 / R1).